We begin with the raw amino-acid sequence, 939 residues long: Trafficking kinesin-binding protein 1 (939 aa).

The 308-residue stretch at 46-353 (LEEQLPHYKL…EELKNLRNKT (308 aa)) folds into the HAP1 N-terminal domain. A coiled-coil region spans residues 106 to 354 (KTYNDIDAVT…ELKNLRNKTM (249 aa)). The interval 359 to 509 (RYHSLGLFPM…SLRRENYLSE (151 aa)) is interaction with HGS. An O-linked (GlcNAc) serine glycan is attached at Ser-444. The tract at residues 472-492 (LGNEDHNKKPGTPGTPGSHDL) is disordered. A coiled-coil region spans residues 490-524 (HDLETALRRLSLRRENYLSERRFFEEEQERKLREL). At Ser-534 the chain carries Phosphoserine. The interaction with OGT stretch occupies residues 655 to 669 (PGKCMSQTNSTFTFT). O-linked (GlcNAc) serine glycans are attached at residues Ser-677 and Ser-716. 2 positions are modified to phosphoserine: Ser-716 and Ser-905.

Belongs to the milton family. In terms of assembly, interacts with RHOT1 and RHOT2. Found in a complex with KIF5B, OGT, RHOT1 and RHOT2. Interacts with HGS. Interacts with GABRA1. Interacts with KIF5C. Interacts with OGT; stable interaction is not required for glycosylation of this protein by OGT. Isoform 1 interacts with OGT. Post-translationally, O-glycosylated. Glycosylated by OGT; glycosylation in response to increased extracellular glucose levels is required for and leads to regulation of mitochondrial motility by OGT. Widely expressed with the greatest expression in brain, liver and kidney. Detected throughout the CNS, including the cortex, hippocamps, thalamus and various subcortical nuclei of the forebrain and midbrain, the granule of Purkinje layers of the cerebellum and the gray matter of the spinal cord. High level detected in lower moter neurons (at protein level).

It is found in the cytoplasm. The protein localises to the nucleus. Its subcellular location is the mitochondrion. The protein resides in the early endosome. It localises to the endosome. It is found in the mitochondrion membrane. The protein localises to the cell cortex. Involved in the regulation of endosome-to-lysosome trafficking, including endocytic trafficking of EGF-EGFR complexes and GABA-A receptors. Involved in mitochondrial motility. When O-glycosylated, abolishes mitochondrial motility. Crucial for recruiting OGT to the mitochondrial surface of neuronal processes. TRAK1 and RHOT form an essential protein complex that links KIF5 to mitochondria for light chain-independent, anterograde transport of mitochondria. The protein is Trafficking kinesin-binding protein 1 (Trak1) of Mus musculus (Mouse).